The following is a 191-amino-acid chain: Protein NUCLEAR FUSION DEFECTIVE 2 (191 aa).

The signal sequence occupies residues 1–29; sequence MATLRFTLLLLVFVVGIFFSFSSVSHVRA. The 120-residue stretch at 48–167 folds into the RNase III domain; that stretch reads LAKLQTQIGY…IFGAIAIDAG (120 aa).

Required for karyogamy during female gametophyte development, when the two polar nuclei fuse to form the diploid central cell nucleus. The protein is Protein NUCLEAR FUSION DEFECTIVE 2 of Arabidopsis thaliana (Mouse-ear cress).